The chain runs to 172 residues: Putative F-box protein At3g13825 (172 aa).

The 51-residue stretch at 1–51 (MTTLSNLSVDLVGEIFSRVPLISLSEVRCTCTTWNTLSWNILSENYVFGKA) folds into the F-box domain.

The protein is Putative F-box protein At3g13825 of Arabidopsis thaliana (Mouse-ear cress).